We begin with the raw amino-acid sequence, 285 residues long: 4-diphosphocytidyl-2-C-methyl-D-erythritol kinase (285 aa).

K12 is an active-site residue. 95–105 (PMGGGVGGGSS) contacts ATP. D137 is an active-site residue.

Belongs to the GHMP kinase family. IspE subfamily.

It carries out the reaction 4-CDP-2-C-methyl-D-erythritol + ATP = 4-CDP-2-C-methyl-D-erythritol 2-phosphate + ADP + H(+). Its pathway is isoprenoid biosynthesis; isopentenyl diphosphate biosynthesis via DXP pathway; isopentenyl diphosphate from 1-deoxy-D-xylulose 5-phosphate: step 3/6. In terms of biological role, catalyzes the phosphorylation of the position 2 hydroxy group of 4-diphosphocytidyl-2C-methyl-D-erythritol. This is 4-diphosphocytidyl-2-C-methyl-D-erythritol kinase from Actinobacillus pleuropneumoniae serotype 3 (strain JL03).